A 192-amino-acid chain; its full sequence is MFKNTFQSGFLSILYSIGSKPLQIWDKKVRNGHIKRITDNDIQSLVLEVEGTNVSTTYITCPADPKKTLGIKLPFLVMIIKNLKKYFTFEVQVLDDKNVRRRFRASNYQSTTRVKPFICTMPMRLDDGWNQIQFNLSDFTRRAYGTNYIETLRVQIHANCRIRRVYFSDRLYSEDELPAEFKLYLPVQNKAK.

Belongs to the CFAP20 family.

It is found in the nucleus. It localises to the cytoplasm. The protein localises to the cytoskeleton. The protein resides in the microtubule organizing center. Its subcellular location is the centrosome. It is found in the centriole. It localises to the cilium basal body. The protein localises to the cilium axoneme. Its function is as follows. Cilium- and flagellum-specific protein that plays a role in axonemal structure organization and motility. Microtubule inner protein (MIP) part of the dynein-decorated doublet microtubules (DMTs) in cilia axoneme, which is required for motile cilia beating. Involved in the regulation of the size and morphology of cilia. Required for axonemal microtubules polyglutamylation. Plays a role in cilia stability. The protein is Cilia- and flagella-associated protein 20 (cfap20) of Danio rerio (Zebrafish).